A 171-amino-acid chain; its full sequence is Alpha-amylase/trypsin inhibitor CMd (171 aa).

The signal sequence occupies residues 1-24 (MACKSSRSLLLLATVMVSVFAAAA).

Belongs to the protease inhibitor I6 (cereal trypsin/alpha-amylase inhibitor) family. As to quaternary structure, heterotetramer of one CMa, one CMb and two CMd chains. In terms of processing, five disulfide bonds, which are essential for the inhibitor activity, are probably present. As to expression, endosperm.

The protein resides in the secreted. Functionally, part of a complex with inhibitory activity, but CMd is inactive as a separate subunit. This is Alpha-amylase/trypsin inhibitor CMd (IAT3) from Hordeum vulgare (Barley).